The following is a 73-amino-acid chain: Translation initiation factor IF-1 1 (73 aa).

The S1-like domain occupies 1-72 (MAKEELIEFG…TKGRINFRHK (72 aa)).

The protein belongs to the IF-1 family. Component of the 30S ribosomal translation pre-initiation complex which assembles on the 30S ribosome in the order IF-2 and IF-3, IF-1 and N-formylmethionyl-tRNA(fMet); mRNA recruitment can occur at any time during PIC assembly.

The protein resides in the cytoplasm. One of the essential components for the initiation of protein synthesis. Stabilizes the binding of IF-2 and IF-3 on the 30S subunit to which N-formylmethionyl-tRNA(fMet) subsequently binds. Helps modulate mRNA selection, yielding the 30S pre-initiation complex (PIC). Upon addition of the 50S ribosomal subunit IF-1, IF-2 and IF-3 are released leaving the mature 70S translation initiation complex. In Cupriavidus metallidurans (strain ATCC 43123 / DSM 2839 / NBRC 102507 / CH34) (Ralstonia metallidurans), this protein is Translation initiation factor IF-1 1.